The following is a 706-amino-acid chain: Transmembrane 9 superfamily member 3 (706 aa).

The signal sequence occupies residues 1-33; the sequence is MRVRPKRSVITLMAIVVVMLILRNQFYSSRTRG. At 34–290 the chain is on the lumenal side; it reads HGQEPVISSS…LSDEQSIQFH (257 aa). A helical membrane pass occupies residues 291–311; sequence WMSLANSVGIVLSISFITLII. Over 312 to 371 the chain is Cytoplasmic; the sequence is YVRVMYTDKSNSKSPKYMINIEGIETEDDLDDDKYGKYSVYTVAKDWIQNGRPNLFGLKV. The chain crosses the membrane as a helical span at residues 372–392; that stretch reads LILLVSFGVQFLFTIIGSLTI. Over 393-405 the chain is Lumenal; that stretch reads SCSMNKLHNVRNS. A helical transmembrane segment spans residues 406-426; the sequence is VLTMAILFFVLGAFMASFVGT. Residues 427–456 are Cytoplasmic-facing; sequence RLSMVTKTKRTKANYLDDNRYLKDYKKFSP. Residues 457-477 traverse the membrane as a helical segment; sequence IFTILCGSSLPGIVMVSTFLL. The Lumenal segment spans residues 478 to 494; that stretch reads NSIVWAHDSTSALPFKT. A helical membrane pass occupies residues 495–515; sequence IVFFMSIYFIVCIPLSLFGGI. At 516 to 553 the chain is on the cytoplasmic side; sequence VANNIPLPQYWLSGITKDESNSDGNGLFVPKSRAKFNP. The helical transmembrane segment at 554 to 574 threads the bilayer; the sequence is LVYCGIYLCGIFPLLVIYVEM. At 575 to 592 the chain is on the lumenal side; the sequence is QYVYKSLWLEKTTFYYFY. A helical transmembrane segment spans residues 593 to 613; sequence GFLFLSIILLCVLTMEISIIG. Topologically, residues 614 to 637 are cytoplasmic; it reads SYLLMRFCFEDKVVRNNWRWKCFE. The helical transmembrane segment at 638–658 threads the bilayer; that stretch reads MGFSGGVYMELYSLYYIFAVL. Residues 659 to 665 lie on the Lumenal side of the membrane; sequence NIHGFSS. Residues 666–686 traverse the membrane as a helical segment; the sequence is ILISICYSLIFNVMCSLGLGA. Residues 687–706 are Cytoplasmic-facing; sequence LSYLTASWFINKIYHQKVNL.

It belongs to the nonaspanin (TM9SF) (TC 9.A.2) family.

Its subcellular location is the golgi apparatus membrane. In terms of biological role, with EMP70 and TMN2, plays a critical role in the late stages of a nutrient-controlled pathway notably regulating FLO11 gene expression. Acts downstream of RAS2 and TOR. Essential for cell adhesion and filamentous growth. May play a role as effector of cellular copper homeostasis. The polypeptide is Transmembrane 9 superfamily member 3 (TMN3) (Saccharomyces cerevisiae (strain ATCC 204508 / S288c) (Baker's yeast)).